A 386-amino-acid polypeptide reads, in one-letter code: Succinate--CoA ligase [ADP-forming] subunit beta (386 aa).

The 236-residue stretch at 9-244 folds into the ATP-grasp domain; the sequence is KEILRKYGVP…HDEEDPLETR (236 aa). ATP contacts are provided by residues Lys-46, 53 to 55, Glu-99, Cys-102, and Glu-107; that span reads GRG. Asn-199 and Asp-213 together coordinate Mg(2+). Substrate contacts are provided by residues Asn-264 and 321–323; that span reads GIM.

This sequence belongs to the succinate/malate CoA ligase beta subunit family. In terms of assembly, heterotetramer of two alpha and two beta subunits. Requires Mg(2+) as cofactor.

The catalysed reaction is succinate + ATP + CoA = succinyl-CoA + ADP + phosphate. The enzyme catalyses GTP + succinate + CoA = succinyl-CoA + GDP + phosphate. Its pathway is carbohydrate metabolism; tricarboxylic acid cycle; succinate from succinyl-CoA (ligase route): step 1/1. Succinyl-CoA synthetase functions in the citric acid cycle (TCA), coupling the hydrolysis of succinyl-CoA to the synthesis of either ATP or GTP and thus represents the only step of substrate-level phosphorylation in the TCA. The beta subunit provides nucleotide specificity of the enzyme and binds the substrate succinate, while the binding sites for coenzyme A and phosphate are found in the alpha subunit. This chain is Succinate--CoA ligase [ADP-forming] subunit beta, found in Rickettsia conorii (strain ATCC VR-613 / Malish 7).